The primary structure comprises 127 residues: Small ribosomal subunit protein uS11 (127 aa).

Belongs to the universal ribosomal protein uS11 family. As to quaternary structure, part of the 30S ribosomal subunit. Interacts with proteins S7 and S18. Binds to IF-3.

Located on the platform of the 30S subunit, it bridges several disparate RNA helices of the 16S rRNA. Forms part of the Shine-Dalgarno cleft in the 70S ribosome. In Streptococcus pyogenes serotype M1, this protein is Small ribosomal subunit protein uS11.